The following is a 201-amino-acid chain: Histidine biosynthesis bifunctional protein HisIE (201 aa).

The interval 1-111 (MKINWQKVDN…EKTTQPDWIF (111 aa)) is phosphoribosyl-AMP cyclohydrolase. The interval 112-201 (LSKLERLIAS…IHKLKERHTK (90 aa)) is phosphoribosyl-ATP pyrophosphohydrolase.

This sequence in the N-terminal section; belongs to the PRA-CH family. The protein in the C-terminal section; belongs to the PRA-PH family.

It localises to the cytoplasm. The enzyme catalyses 1-(5-phospho-beta-D-ribosyl)-ATP + H2O = 1-(5-phospho-beta-D-ribosyl)-5'-AMP + diphosphate + H(+). It catalyses the reaction 1-(5-phospho-beta-D-ribosyl)-5'-AMP + H2O = 1-(5-phospho-beta-D-ribosyl)-5-[(5-phospho-beta-D-ribosylamino)methylideneamino]imidazole-4-carboxamide. It functions in the pathway amino-acid biosynthesis; L-histidine biosynthesis; L-histidine from 5-phospho-alpha-D-ribose 1-diphosphate: step 2/9. The protein operates within amino-acid biosynthesis; L-histidine biosynthesis; L-histidine from 5-phospho-alpha-D-ribose 1-diphosphate: step 3/9. This Pasteurella multocida (strain Pm70) protein is Histidine biosynthesis bifunctional protein HisIE (hisI).